Reading from the N-terminus, the 445-residue chain is Phosphoglucosamine mutase (445 aa).

Serine 102 acts as the Phosphoserine intermediate in catalysis. The Mg(2+) site is built by serine 102, aspartate 241, aspartate 243, and aspartate 245. Serine 102 is modified (phosphoserine).

It belongs to the phosphohexose mutase family. Mg(2+) is required as a cofactor. Post-translationally, activated by phosphorylation.

It catalyses the reaction alpha-D-glucosamine 1-phosphate = D-glucosamine 6-phosphate. Catalyzes the conversion of glucosamine-6-phosphate to glucosamine-1-phosphate. The polypeptide is Phosphoglucosamine mutase (Rhodococcus opacus (strain B4)).